The sequence spans 271 residues: Aminoglycoside N(3)-acetyltransferase III (271 aa).

Histidine 31, alanine 32, serine 33, valine 34, and lysine 35 together coordinate CoA. Residues tyrosine 64, aspartate 72, and glutamate 102 each contribute to the a 2-deoxystreptamine antibiotic site. 3 residues coordinate CoA: serine 104, valine 105, and phenylalanine 109. 3 residues coordinate a 2-deoxystreptamine antibiotic: glutamate 123, tyrosine 146, and aspartate 170. 2 residues coordinate CoA: threonine 171 and threonine 173. 4 residues coordinate a 2-deoxystreptamine antibiotic: histidine 176, threonine 212, glycine 213, and phenylalanine 221.

Belongs to the antibiotic N-acetyltransferase family. In terms of assembly, homodimer.

It carries out the reaction a 2-deoxystreptamine antibiotic + acetyl-CoA = an N(3)-acetyl-2-deoxystreptamine antibiotic + CoA + H(+). Its function is as follows. Resistance to antibiotics containing the 2-deoxy-streptamine ring including dibekacin, gentamicin, kanamycin, sisomicin, tobramycin and neomycin, but not to amikacin or netilmicin. Acetylates a broad range of both 4,5- and 4,6-disubstituted aminoglycosides, including neomycin, paromomycin, ribostamycin, sisomicin, gentamicin, tobramycin and kanamycin, with no preference of one disubstitution over the other. Acetylates sisomicin and kanamycin most and least efficiently, respectively. Does not modify plazomicin. This Pseudomonas aeruginosa protein is Aminoglycoside N(3)-acetyltransferase III.